A 112-amino-acid chain; its full sequence is Divalent-cation tolerance protein CutA (112 aa).

3 residues coordinate Cu cation: Cys-16, His-83, and His-84.

The protein belongs to the CutA family. As to quaternary structure, homotrimer. Requires Cu cation as cofactor.

The protein localises to the cytoplasm. Its function is as follows. Involved in resistance toward heavy metals. This Shigella boydii serotype 18 (strain CDC 3083-94 / BS512) protein is Divalent-cation tolerance protein CutA.